Consider the following 449-residue polypeptide: Glycosyl hydrolase-like protein 1 (449 aa).

A beta-D-glucoside is bound by residues Gln-22, His-119, 164–165, Tyr-292, Glu-350, Trp-393, and Tyr-406; that span reads NE. The active-site Proton donor is the Glu-165. Residue Glu-350 is the Nucleophile of the active site.

Belongs to the glycosyl hydrolase 1 family. In terms of tissue distribution, mainly expressed in flowers, flower buds and young leaves, and, to a lesser extent, in old leaves, stems and roots.

It localises to the cytoplasm. The protein operates within secondary metabolite biosynthesis; terpenoid biosynthesis. Functionally, component of the oleanane-type triterpene saponins (e.g. saponarioside A and saponarioside B) biosynthetic pathway, leading to the production of natural products with detergent properties used as traditional sources of soap. Beta-glycosidase that catalyzes the transfer of glucose moiety to QA-triFRXX to produce QA-triF(Q)RXX via the elongation of the C-28 sugar chain with a D-quinovose. This is Glycosyl hydrolase-like protein 1 from Saponaria officinalis (Common soapwort).